The sequence spans 571 residues: Kinesin light chain (571 aa).

Residues 54–160 adopt a coiled-coil conformation; that stretch reads LLTSMKTIRK…KKHLEFMNEM (107 aa). Over residues 167–177 the composition is skewed to basic and acidic residues; it reads EAQVNEEKESE. The segment at 167–210 is disordered; that stretch reads EAQVNEEKESEQSSLDLGFPDDDDDGGQPEVLSPTQPSAMAQAA. 6 TPR repeats span residues 220–253, 262–295, 304–337, 346–379, 388–421, and 471–504; these read LRTL…LEKT, ATML…REKT, AATL…REKV, AKQL…YQKE, AKTK…AHEK, and TTTL…RKSA. The tract at residues 518-571 is disordered; that stretch reads GSDFSKGQSPKDRKRSNSRDRNRRDSMDSVSYEKSGDGDEHEKSKLHVGTSHKQ. 2 stretches are compositionally biased toward basic and acidic residues: residues 526-544 and 551-562; these read SPKD…RDSM and KSGDGDEHEKSK.

It belongs to the kinesin light chain family. As to quaternary structure, oligomeric complex composed of two heavy chains and two light chains.

Its subcellular location is the cytoplasm. It is found in the cytoskeleton. Functionally, kinesin is a microtubule-associated force-producing protein that may play a role in organelle transport. The light chain may function in coupling of cargo to the heavy chain or in the modulation of its ATPase activity. This chain is Kinesin light chain, found in Doryteuthis pealeii (Longfin inshore squid).